Here is a 334-residue protein sequence, read N- to C-terminus: Ornithine carbamoyltransferase, catabolic (334 aa).

Carbamoyl phosphate-binding positions include 57–60, Gln84, Arg108, and 135–138; these read STRT and HPTQ. L-ornithine-binding positions include Asn168, Asp232, and 236 to 237; that span reads SM. Residues 274 to 275 and Arg320 each bind carbamoyl phosphate; that span reads CL.

It belongs to the aspartate/ornithine carbamoyltransferase superfamily. OTCase family.

The protein resides in the cytoplasm. The enzyme catalyses carbamoyl phosphate + L-ornithine = L-citrulline + phosphate + H(+). It functions in the pathway amino-acid degradation; L-arginine degradation via ADI pathway; carbamoyl phosphate from L-arginine: step 2/2. Reversibly catalyzes the transfer of the carbamoyl group from carbamoyl phosphate (CP) to the N(epsilon) atom of ornithine (ORN) to produce L-citrulline. The polypeptide is Ornithine carbamoyltransferase, catabolic (arcB) (Rhizobium meliloti (strain 1021) (Ensifer meliloti)).